The following is a 156-amino-acid chain: Ribosome maturation factor RimP (156 aa).

It belongs to the RimP family.

It localises to the cytoplasm. Its function is as follows. Required for maturation of 30S ribosomal subunits. This is Ribosome maturation factor RimP from Bacillus cereus (strain B4264).